The primary structure comprises 170 residues: Aspartate 1-decarboxylase (170 aa).

Ser25 serves as the catalytic Schiff-base intermediate with substrate; via pyruvic acid. At Ser25 the chain carries Pyruvic acid (Ser). Position 57 (Thr57) interacts with substrate. Tyr58 (proton donor) is an active-site residue. 73–75 lines the substrate pocket; the sequence is GAA. Residues 118 to 170 form a disordered region; the sequence is GHDPAEALPDDPSSLRGDLAVPGNPVTAAARRGTPTHQAPVALPASRTVVAPR.

The protein belongs to the PanD family. As to quaternary structure, heterooctamer of four alpha and four beta subunits. The cofactor is pyruvate. Post-translationally, is synthesized initially as an inactive proenzyme, which is activated by self-cleavage at a specific serine bond to produce a beta-subunit with a hydroxyl group at its C-terminus and an alpha-subunit with a pyruvoyl group at its N-terminus.

The protein localises to the cytoplasm. The enzyme catalyses L-aspartate + H(+) = beta-alanine + CO2. Its pathway is cofactor biosynthesis; (R)-pantothenate biosynthesis; beta-alanine from L-aspartate: step 1/1. Functionally, catalyzes the pyruvoyl-dependent decarboxylation of aspartate to produce beta-alanine. In Frankia alni (strain DSM 45986 / CECT 9034 / ACN14a), this protein is Aspartate 1-decarboxylase.